Here is a 431-residue protein sequence, read N- to C-terminus: STE20-related kinase adapter protein alpha (431 aa).

S2 and S46 each carry phosphoserine. Disordered stretches follow at residues 32 to 52 and 314 to 344; these read EQPP…SIAS and PSRS…SHPY. The region spanning 69 to 379 is the Protein kinase domain; sequence YELLTIIGKG…ASTLLNHSFF (311 aa). T419 is modified (phosphothreonine; by LKB1).

It belongs to the protein kinase superfamily. STE Ser/Thr protein kinase family. STE20 subfamily. In terms of assembly, component of a trimeric complex composed of STK11/LKB1, STRAD (STRADA or STRADB) and CAB39/MO25 (CAB39/MO25alpha or CAB39L/MO25beta): the complex tethers STK11/LKB1 in the cytoplasm and stimulates its catalytic activity.

Its subcellular location is the nucleus. It is found in the cytoplasm. In terms of biological role, pseudokinase which, in complex with CAB39/MO25 (CAB39/MO25alpha or CAB39L/MO25beta), binds to and activates STK11/LKB1. Adopts a closed conformation typical of active protein kinases and binds STK11/LKB1 as a pseudosubstrate, promoting conformational change of STK11/LKB1 in an active conformation. The protein is STE20-related kinase adapter protein alpha (Strada) of Mus musculus (Mouse).